A 239-amino-acid polypeptide reads, in one-letter code: Fatty acid metabolism regulator protein (239 aa).

An HTH gntR-type domain is found at 6–74 (QSPAGFAEEY…HGKPTKVNNF (69 aa)). The segment at residues 34 to 53 (ERELSELIGVTRTTLREVLQ) is a DNA-binding region (H-T-H motif).

As to quaternary structure, homodimer.

Its subcellular location is the cytoplasm. Multifunctional regulator of fatty acid metabolism. The polypeptide is Fatty acid metabolism regulator protein (Klebsiella pneumoniae subsp. pneumoniae (strain ATCC 700721 / MGH 78578)).